The primary structure comprises 420 residues: Acetyl-CoA acetyltransferase B, mitochondrial (420 aa).

The transit peptide at 1–33 (MAFCGPRTAARLSHSTRALHYTHRSFASPRTLN) directs the protein to the mitochondrion. Cys119 functions as the Acyl-thioester intermediate in the catalytic mechanism. CoA-binding positions include Tyr212, 251 to 253 (RVD), and Lys256. Tyr212 lines the K(+) pocket. Ala273 and Ala274 together coordinate K(+). Ser277 contacts CoA. Val374 contributes to the K(+) binding site. Cys406 functions as the Proton donor/acceptor in the catalytic mechanism.

The protein belongs to the thiolase-like superfamily. Thiolase family. Homotetramer.

The protein localises to the mitochondrion. It carries out the reaction 2 acetyl-CoA = acetoacetyl-CoA + CoA. The catalysed reaction is propanoyl-CoA + acetyl-CoA = 2-methyl-3-oxobutanoyl-CoA + CoA. It participates in lipid metabolism; fatty acid beta-oxidation. Its function is as follows. This is one of the enzymes that catalyzes the last step of the mitochondrial beta-oxidation pathway, an aerobic process breaking down fatty acids into acetyl-CoA. Using free coenzyme A/CoA, catalyzes the thiolytic cleavage of medium- to long-chain 3-oxoacyl-CoAs into acetyl-CoA and a fatty acyl-CoA shortened by two carbon atoms. The activity of the enzyme is reversible and it can also catalyze the condensation of two acetyl-CoA molecules into acetoacetyl-CoA. Thereby, it plays a major role in ketone body metabolism. The polypeptide is Acetyl-CoA acetyltransferase B, mitochondrial (acat1-b) (Xenopus laevis (African clawed frog)).